Reading from the N-terminus, the 701-residue chain is Peptide transporter CstA (701 aa).

Topologically, residues 1–6 (MNKSGK) are cytoplasmic. Residues 7 to 27 (YLVWTVLSVMGAFALGYIALN) form a helical membrane-spanning segment. Topologically, residues 28–33 (RGEQIN) are periplasmic. Residues 34–54 (ALWIVVASVCIYLIAYRFYGL) form a helical membrane-spanning segment. Topologically, residues 55 to 86 (YIAKNVLAVDPTRMTPAVRHNDGLDYVPTDKK) are cytoplasmic. A helical transmembrane segment spans residues 87-107 (VLFGHHFAAIAGAGPLVGPVL). At 108–117 (AAQMGYLPGM) the chain is on the periplasmic side. The helical transmembrane segment at 118–138 (IWLLAGVVLAGAVQDFMVLFV) threads the bilayer. Residues 139–160 (STRRDGRSLGELVKEEMGPTAG) are Cytoplasmic-facing. The helical transmembrane segment at 161 to 181 (VIALVACFMIMVIILAVLAMI) threads the bilayer. Residues 182–189 (VVKALTHS) are Periplasmic-facing. The helical transmembrane segment at 190 to 210 (PWGTYTVAFTIPLALFMGIYL) threads the bilayer. Topologically, residues 211–217 (RYLRPGR) are cytoplasmic. Residues 218–238 (IGEVSVIGLVFLIFAIISGGW) form a helical membrane-spanning segment. Topologically, residues 239 to 255 (VAESPTWAPYFDFTGVQ) are periplasmic. Residues 256–276 (LTWMLVGYGFVAAVLPVWLLL) form a helical membrane-spanning segment. The Cytoplasmic portion of the chain corresponds to 277–280 (APRD). A helical transmembrane segment spans residues 281–301 (YLSTFLKIGTIVGLAVGILIM). The Periplasmic segment spans residues 302 to 324 (RPTLTMPALTKFVDGTGPVWTGN). Residues 325–345 (LFPFLFITIACGAVSGFHALI) traverse the membrane as a helical segment. Over 346–372 (SSGTTPKMLANEGQACFIGYGGMLMES) the chain is Cytoplasmic. A helical membrane pass occupies residues 373-393 (FVAIMALVSACIIDPGVYFAM). Residues 394–395 (NS) are Periplasmic-facing. A helical membrane pass occupies residues 396 to 416 (PMAVLAPAGTADVVASAAQVV). Residues 417 to 439 (SSWGFSITPDTLNQIASEVGEQS) are Cytoplasmic-facing. Residues 440–460 (IISRAGGAPTLAVGMAYILHG) form a helical membrane-spanning segment. At 461–463 (ALG) the chain is on the periplasmic side. A helical membrane pass occupies residues 464 to 484 (GMMDVAFWYHFAILFEALFIL). The Cytoplasmic segment spans residues 485–523 (TAVDAGTRAARFMLQDLLGVVSPGLKRTDSLPANLLATA). The chain crosses the membrane as a helical span at residues 524–544 (LCVLAWGYFLHQGVVDPLGGI). Topologically, residues 545–550 (NTLWPL) are periplasmic. The helical transmembrane segment at 551 to 571 (FGIANQMLAGMALMLCAVVLF) threads the bilayer. The Cytoplasmic portion of the chain corresponds to 572 to 577 (KMKRQR). A helical transmembrane segment spans residues 578–598 (YAWVALVPTAWLLICTLTAGW). The Periplasmic segment spans residues 599-643 (QKAFSPDAKVGFLAIANKFQAMIDSGNIPSQYTESQLAQLVFNNR). Residues 644–664 (LDAGLTIFFMVVVVVLALFSI) traverse the membrane as a helical segment. At 665–701 (KTALAALKDPKPTAKETPYEPMPENVEEIVAQAKGAH) the chain is on the cytoplasmic side.

The protein belongs to the peptide transporter carbon starvation (CstA) (TC 2.A.114) family.

Its subcellular location is the cell inner membrane. Functionally, involved in peptide utilization during carbon starvation. This Escherichia coli (strain K12) protein is Peptide transporter CstA.